The chain runs to 326 residues: Cytosolic Fe-S cluster assembly factor NBP35 (326 aa).

The interval 1–38 (MTEIANGQQILPPDYTLKEPEPEHCPGPESENAGKGDS) is disordered. The span at 16-26 (TLKEPEPEHCP) shows a compositional bias: basic and acidic residues. [4Fe-4S] cluster contacts are provided by Cys25, Cys39, Cys42, and Cys48. ATP is bound at residue 78-85 (GKGGVGKS). Cys251 and Cys254 together coordinate [4Fe-4S] cluster.

The protein belongs to the Mrp/NBP35 ATP-binding proteins family. NUBP1/NBP35 subfamily. In terms of assembly, heterotetramer of 2 NBP35 and 2 CFD1 chains. It depends on [4Fe-4S] cluster as a cofactor.

The protein resides in the cytoplasm. The protein localises to the nucleus. Its function is as follows. Component of the cytosolic iron-sulfur (Fe/S) protein assembly (CIA) machinery. Required for maturation of extramitochondrial Fe-S proteins. The NBP35-CFD1 heterotetramer forms a Fe-S scaffold complex, mediating the de novo assembly of an Fe-S cluster and its transfer to target apoproteins. Required for biogenesis and export of both ribosomal subunits, which may reflect a role in assembly of the Fe/S clusters in RLI1, a protein which performs rRNA processing and ribosome export. This is Cytosolic Fe-S cluster assembly factor NBP35 from Kluyveromyces lactis (strain ATCC 8585 / CBS 2359 / DSM 70799 / NBRC 1267 / NRRL Y-1140 / WM37) (Yeast).